We begin with the raw amino-acid sequence, 116 residues long: MNPGGGLDMQAILQQAQQMQQQLMAAQQELDETKVTGSSGGGLVSVTMNGRGQVEDVSIDPKAVDPDDAAETAQTIADLVLAAIRDGERMVEEIQQQKMGPLAQGLGGGFPGLPGL.

Belongs to the YbaB/EbfC family. As to quaternary structure, homodimer.

It is found in the cytoplasm. The protein localises to the nucleoid. In terms of biological role, binds to DNA and alters its conformation. May be involved in regulation of gene expression, nucleoid organization and DNA protection. In Thermobifida fusca (strain YX), this protein is Nucleoid-associated protein Tfu_0045.